The primary structure comprises 276 residues: tRNA (guanine-N(7)-)-methyltransferase (276 aa).

Residues 1–36 form a disordered region; the sequence is MAAETRNVAGAEAPPPQKRYYRQRAHSNPMADHTLR. Residue Ala-2 is modified to N-acetylalanine. Position 27 is a phosphoserine; by PKB/AKT1 and RPS6KA3 (Ser-27). 7 residues coordinate S-adenosyl-L-homocysteine: Gly-84, Glu-107, Ile-108, Arg-109, Asn-140, Ala-141, and Leu-160. The S-adenosyl-L-methionine site is built by Gly-84 and Glu-107. Residues Arg-109, Asn-140, Ala-141, and Leu-160 each contribute to the S-adenosyl-L-methionine site. Asp-163 is a catalytic residue. The interval 164–172 is alphaC helix; it reads PHFKRTKHK. Thr-238 and Glu-240 together coordinate S-adenosyl-L-homocysteine. S-adenosyl-L-methionine is bound by residues Thr-238 and Glu-240. The interval 238-246 is alpha6 helix; the sequence is TEEGKKVLR.

The protein belongs to the class I-like SAM-binding methyltransferase superfamily. TrmB family. In terms of assembly, catalytic component of the METTL1-WDR4 complex, composed of METTL1 and WDR4. In terms of processing, phosphorylation at Ser-27 by PKB/AKT1 inactivates its methyltransferase activity via a steric interference mechanism in the active site that locally disrupts the catalytic center. Phosphorylation at Ser-27 does not affect the interaction with WDR4. As to expression, ubiquitous.

It is found in the nucleus. It carries out the reaction guanosine(46) in tRNA + S-adenosyl-L-methionine = N(7)-methylguanosine(46) in tRNA + S-adenosyl-L-homocysteine. The catalysed reaction is a guanosine in mRNA + S-adenosyl-L-methionine = an N(7)-methylguanosine in mRNA + S-adenosyl-L-homocysteine. It catalyses the reaction a guanosine in miRNA + S-adenosyl-L-methionine = an N(7)-methylguanosine in miRNA + S-adenosyl-L-homocysteine. The protein operates within tRNA modification; N(7)-methylguanine-tRNA biosynthesis. Catalytic component of METTL1-WDR4 methyltransferase complex that mediates the formation of N(7)-methylguanine in a subset of RNA species, such as tRNAs, mRNAs and microRNAs (miRNAs). Catalyzes the formation of N(7)-methylguanine at position 46 (m7G46) in a large subset of tRNAs that contain the 5'-RAGGU-3' motif within the variable loop. M7G46 interacts with C13-G22 in the D-loop to stabilize tRNA tertiary structure and protect tRNAs from decay. Also acts as a methyltransferase for a subset of internal N(7)-methylguanine in mRNAs. Internal N(7)-methylguanine methylation of mRNAs in response to stress promotes their relocalization to stress granules, thereby suppressing their translation. Also methylates a specific subset of miRNAs, such as let-7. N(7)-methylguanine methylation of let-7 miRNA promotes let-7 miRNA processing by disrupting an inhibitory secondary structure within the primary miRNA transcript (pri-miRNA). Acts as a regulator of embryonic stem cell self-renewal and differentiation. In Homo sapiens (Human), this protein is tRNA (guanine-N(7)-)-methyltransferase.